Consider the following 593-residue polypeptide: Aspartate--tRNA(Asp/Asn) ligase (593 aa).

L-aspartate is bound at residue Glu173. The segment at Gln197–Lys200 is aspartate. Arg219 contacts L-aspartate. ATP is bound by residues Arg219–Glu221 and Gln228. His451 is a binding site for L-aspartate. Glu485 is an ATP binding site. Arg492 provides a ligand contact to L-aspartate. Gly537–Arg540 contributes to the ATP binding site.

Belongs to the class-II aminoacyl-tRNA synthetase family. Type 1 subfamily. As to quaternary structure, homodimer.

It is found in the cytoplasm. The catalysed reaction is tRNA(Asx) + L-aspartate + ATP = L-aspartyl-tRNA(Asx) + AMP + diphosphate. Aspartyl-tRNA synthetase with relaxed tRNA specificity since it is able to aspartylate not only its cognate tRNA(Asp) but also tRNA(Asn). Reaction proceeds in two steps: L-aspartate is first activated by ATP to form Asp-AMP and then transferred to the acceptor end of tRNA(Asp/Asn). This Legionella pneumophila (strain Corby) protein is Aspartate--tRNA(Asp/Asn) ligase.